The following is a 254-amino-acid chain: PF03932 family protein CutC (254 aa).

This sequence belongs to the CutC family.

The protein resides in the cytoplasm. This Yersinia pestis bv. Antiqua (strain Angola) protein is PF03932 family protein CutC.